Reading from the N-terminus, the 784-residue chain is Ribosome biogenesis protein BOP1 homolog (784 aa).

Basic residues predominate over residues 1 to 11 (MTKKLALKRKG). Residues 1–159 (MTKKLALKRK…DSDTSDEEDI (159 aa)) form a disordered region. 4 stretches are compositionally biased toward acidic residues: residues 27 to 36 (SENEEEEEDL), 45 to 54 (EDSTDDEGID), 62 to 73 (SEELQFESDEEG), and 84 to 111 (AEED…EDEE). Over residues 112–123 (KDSKLKQSDDKP) the composition is skewed to basic and acidic residues. The segment covering 124-133 (SSSGAASKKA) has biased composition (low complexity). Basic and acidic residues predominate over residues 138–148 (LSKRDTSKPEY). The segment covering 149–158 (QDSDTSDEED) has biased composition (acidic residues). WD repeat units lie at residues 445 to 486 (GHTD…RTIE), 488 to 526 (DEVV…KVLV), 570 to 612 (THFK…SQIP), 615 to 653 (KSKG…LVKK), 656 to 695 (TNSK…KPYQ), 699 to 738 (LHRN…DLLQ), and 754 to 784 (RDEF…RLYT).

It belongs to the WD repeat BOP1/ERB1 family.

It is found in the nucleus. The protein resides in the nucleolus. Its subcellular location is the nucleoplasm. In terms of biological role, required for maturation of ribosomal RNAs and formation of the large ribosomal subunit. This Drosophila erecta (Fruit fly) protein is Ribosome biogenesis protein BOP1 homolog.